Consider the following 179-residue polypeptide: Fucolectin-4 (179 aa).

Residues 1 to 23 (MEVKTIMLLFQILAISTLKQGSA) form the signal peptide. The F5/8 type C-like stretch occupies residues 31-179 (EENVALRGRA…VEVNALLPVN (149 aa)). The Ca(2+) site is built by asparagine 58, aspartate 61, asparagine 63, and serine 72. Disulfide bonds link cysteine 73–cysteine 168, cysteine 104–cysteine 105, and cysteine 130–cysteine 146. Alpha-L-fucose-binding residues include histidine 75 and arginine 101. The Cell attachment site signature appears at 101–103 (RGD). Arginine 108 provides a ligand contact to alpha-L-fucose. Cysteine 168 and glutamate 169 together coordinate Ca(2+).

This sequence belongs to the fucolectin family. Homotrimer. Gill mucous cells.

It localises to the secreted. Acts as a defensive agent. Recognizes blood group fucosylated oligosaccharides including A, B, H and Lewis B-type antigens. Does not recognize Lewis A antigen and has low affinity for monovalent haptens. This Anguilla japonica (Japanese eel) protein is Fucolectin-4.